A 250-amino-acid polypeptide reads, in one-letter code: MVKIAFGSIGDSFSVASIKAYVAEFIATLLFVFAGVGSAIAYNKLTSDAALDPAGLVAVAVAHAFALFVGVSMAANVSGGHLNPAVTLGLAVGGNITILTGLFYWIAQCLGSTVACLLLKFVTNGLSVPTHGVAAGMDAIQGVVMEIIITFALVYTVYATAADPKKGSLGVIAPIAIGFIVGANILAAGPFSGGSMNPARSFGPAVASGDFSQNWIYWAGPLIGGALAGFIYGDVFITAHAPLPTSEDYA.

The next 2 helical transmembrane spans lie at 20-42 and 55-77; these read AYVA…AIAY and GLVA…AANV. The NPA 1 motif lies at 83–85; it reads NPA. Transmembrane regions (helical) follow at residues 97-119, 140-162, and 172-194; these read TILT…CLLL, IQGV…ATAA, and IAPI…FSGG. Residues 197–199 carry the NPA 2 motif; sequence NPA. Residues 215 to 237 traverse the membrane as a helical segment; the sequence is WIYWAGPLIGGALAGFIYGDVFI.

This sequence belongs to the MIP/aquaporin (TC 1.A.8) family. TIP (TC 1.A.8.10) subfamily. Expressed in mature seeds and dark-grown seedlings.

The protein localises to the vacuole membrane. Channel protein in tonoplast. These proteins may allow the diffusion of amino acids and/or peptides from the vacuolar compartment to the cytoplasm. This Antirrhinum majus (Garden snapdragon) protein is Probable aquaporin TIP-type (DIP).